Consider the following 944-residue polypeptide: snRNA-activating protein complex subunit 4 homolog (944 aa).

The tract at residues 1-22 is disordered; sequence MSDLVMFEPGASTSTDVPTNTD. A compositionally biased stretch (polar residues) spans 11 to 22; that stretch reads ASTSTDVPTNTD. In terms of domain architecture, Myb-like 1 spans 177–244; sequence TSNFDRRQWT…AVKSKWYNEL (68 aa). An HTH myb-type 1 domain is found at 245–301; it reads NPKWNKEHWSNEEVEKLKYLRESPKFVSWPMLALNLGTNRTSYQCMEKYKTEVSQHS. The segment at residues 273 to 297 is a DNA-binding region (H-T-H motif); the sequence is WPMLALNLGTNRTSYQCMEKYKTEV. The 47-residue stretch at 304-350 folds into the Myb-like 2 domain; it reads WSQDEDTKLIALTKITSINGHIQWDKVAQCMPGRTRQQVRTRFSHTL. 2 HTH myb-type domains span residues 351–406 and 407–459; these read DASV…NRSA and HVNE…AAKL. 2 DNA-binding regions (H-T-H motif) span residues 379 to 402 and 432 to 455; these read WAKV…TNVL and WAKC…LQLI. Low complexity predominate over residues 911 to 921; that stretch reads ARPARPPRSSA. Residues 911–935 are disordered; it reads ARPARPPRSSAGTPTPSHVSIDTES. The span at 922 to 935 shows a compositional bias: polar residues; sequence GTPTPSHVSIDTES.

As to expression, broadly expressed in all tissues, including head, vulva and tail.

Its subcellular location is the nucleus. Its function is as follows. Binds to the promoter regions of RNA polymerase II and III small-nuclear RNA genes, type 3 RNA polymerase III non-coding RNA genes, small nucleolar RNAs and transfer RNA genes. Required for expression of mature 21U-RNAs. The polypeptide is snRNA-activating protein complex subunit 4 homolog (Caenorhabditis elegans).